The primary structure comprises 496 residues: NADP-dependent glyceraldehyde-3-phosphate dehydrogenase (496 aa).

Substrate is bound by residues Arg-116 and 169 to 170 (NY). Residues Lys-192, Thr-195, and Asp-230 each coordinate NADP(+). An NAD(+)-binding site is contributed by 245-249 (GGDTG). Residue Glu-264 is the Proton acceptor of the active site. 297 to 299 (RCT) provides a ligand contact to substrate. Residue Cys-298 is the Nucleophile of the active site. An NADP(+)-binding site is contributed by Glu-391. Arg-451 lines the substrate pocket.

This sequence belongs to the aldehyde dehydrogenase family.

The protein resides in the cytoplasm. The protein localises to the cytosol. The enzyme catalyses D-glyceraldehyde 3-phosphate + NADP(+) + H2O = (2R)-3-phosphoglycerate + NADPH + 2 H(+). With respect to regulation, competitive inhibition by NADPH, 3-phospho-D-glycerate and ATP. In terms of biological role, important as a means of generating NADPH for biosynthetic reactions. May be a main source of cytosolic NADPH for mannitol biosynthesis in leaves. The protein is NADP-dependent glyceraldehyde-3-phosphate dehydrogenase of Apium graveolens (Celery).